Reading from the N-terminus, the 139-residue chain is Small ribosomal subunit protein bS6 (139 aa).

The tract at residues 118–139 (SFKGGSKIETPTGSESTDIQEK) is disordered. Residues 126–139 (ETPTGSESTDIQEK) show a composition bias toward polar residues.

Belongs to the bacterial ribosomal protein bS6 family.

Functionally, binds together with bS18 to 16S ribosomal RNA. This chain is Small ribosomal subunit protein bS6, found in Borrelia garinii subsp. bavariensis (strain ATCC BAA-2496 / DSM 23469 / PBi) (Borreliella bavariensis).